The primary structure comprises 809 residues: Sodium/hydrogen exchanger 2 (809 aa).

Transmembrane regions (helical) follow at residues 107 to 127, 138 to 158, 169 to 189, 209 to 229, 237 to 257, 278 to 298, and 308 to 328; these read IVPE…IIFG, TDVF…YFMP, IFWY…VSLF, LFGS…FENI, ILVF…YNLF, FFVV…IAAF, and VIEP…AEMF. A glycan (N-linked (GlcNAc...) asparagine) is linked at N350. The next 4 membrane-spanning stretches (helical) occupy residues 361–381, 392–412, 430–450, and 459–479; these read YFMK…MGVS, AFVC…VFVL, FIIA…FLLP, and LFIT…GITI. Composition is skewed to basic and acidic residues over residues 648 to 660 and 793 to 809; these read IRKD…ERRA and RASE…SDKP. 2 disordered regions span residues 648–700 and 734–809; these read IRKD…EADA and EVDA…SDKP.

It belongs to the monovalent cation:proton antiporter 1 (CPA1) transporter (TC 2.A.36) family. As to quaternary structure, interacts with CHP1 and CHP2. High levels in intestine and kidney. Strongly expressed in gastric epithelial cells, with particularly high expression levels in mucous cells.

Its subcellular location is the apical cell membrane. The enzyme catalyses Na(+)(in) + H(+)(out) = Na(+)(out) + H(+)(in). Functionally, plasma membrane Na(+)/H(+) antiporter. Mediates the electroneutral exchange of intracellular H(+) ions for extracellular Na(+). Major apical Na(+)/H(+) exchanger in the base of the colonic crypt. Controls in the colonic crypt intracellular pH (pHi) to direct colonic epithelial cell differentiation into the absorptive enterocyte lineage at the expense of the secretory lineage. In Oryctolagus cuniculus (Rabbit), this protein is Sodium/hydrogen exchanger 2 (SLC9A2).